Consider the following 627-residue polypeptide: (-)-alpha-pinene synthase 2, chloroplastic (627 aa).

A chloroplast-targeting transit peptide spans 1 to 36 (MALVSVAPMASRSCLHKSLSSSAHELKTICRTIPTL). 3 residues coordinate Mg(2+): D378, D382, and D530. The DDXXD motif motif lies at 378 to 382 (DDMYD).

It belongs to the terpene synthase family. Tpsd subfamily. Mg(2+) is required as a cofactor. The cofactor is Mn(2+).

It is found in the plastid. The protein resides in the chloroplast. The enzyme catalyses (2E)-geranyl diphosphate = (1S,5S)-alpha-pinene + diphosphate. The catalysed reaction is (2E)-geranyl diphosphate = (1S,5S)-beta-pinene + diphosphate. It participates in terpene metabolism; oleoresin biosynthesis. Involved in defensive oleoresin formation in conifers in response to insect attack or other injury. Involved in monoterpene (C10) olefins biosynthesis. A mixture of alpha- and beta-pinene (35:10) is produced by this enzyme. The chain is (-)-alpha-pinene synthase 2, chloroplastic from Picea sitchensis (Sitka spruce).